The primary structure comprises 103 residues: Acylphosphatase-2 (103 aa).

Residue Ser2 is modified to N-acetylserine. The region spanning 13 to 103 is the Acylphosphatase-like domain; sequence SVDYEVFGRV…LDFSGFSTRY (91 aa). Active-site residues include Arg28 and Asn46.

It belongs to the acylphosphatase family.

The catalysed reaction is an acyl phosphate + H2O = a carboxylate + phosphate + H(+). Functionally, its physiological role is not yet clear. The protein is Acylphosphatase-2 (ACYP2) of Anas platyrhynchos (Mallard).